A 914-amino-acid polypeptide reads, in one-letter code: Translation initiation factor IF-2 (914 aa).

2 disordered regions span residues 246–271 (EDGE…KKKG) and 293–313 (SGMD…QRRM). The span at 249-266 (EAAKKKAAKPDGGEDVGV) shows a compositional bias: basic and acidic residues. One can recognise a tr-type G domain in the interval 411–581 (TRPPVVTIMG…LAEAEIRELK (171 aa)). Residues 420–427 (GHVDHGKT) are G1. Position 420–427 (420–427 (GHVDHGKT)) interacts with GTP. The interval 445–449 (GITQH) is G2. A G3 region spans residues 467 to 470 (DTPG). Residues 467–471 (DTPGH) and 521–524 (NKID) contribute to the GTP site. Residues 521–524 (NKID) form a G4 region. The tract at residues 557-559 (SAK) is G5.

Belongs to the TRAFAC class translation factor GTPase superfamily. Classic translation factor GTPase family. IF-2 subfamily.

Its subcellular location is the cytoplasm. Its function is as follows. One of the essential components for the initiation of protein synthesis. Protects formylmethionyl-tRNA from spontaneous hydrolysis and promotes its binding to the 30S ribosomal subunits. Also involved in the hydrolysis of GTP during the formation of the 70S ribosomal complex. The chain is Translation initiation factor IF-2 from Chlorobaculum tepidum (strain ATCC 49652 / DSM 12025 / NBRC 103806 / TLS) (Chlorobium tepidum).